The chain runs to 444 residues: E1B 55 kDa protein (444 aa).

The interval 1–35 (MEQNADMEPDRQVNQRPPRFRARGAGVRGRGRVRR) is disordered. Serine 438 and serine 439 each carry phosphoserine.

This sequence belongs to the adenoviridae E1B 55 kDa protein family. As to quaternary structure, interacts with host PML-4 and PML-5; this interaction promotes efficient subnuclear targeting of E1B-55K to PML nuclear bodies. Interacts with E4-ORF3 protein. Interacts with E4-ORF6 protein.

The protein localises to the host nucleus. The protein resides in the host cytoplasm. Functionally, plays a major role to prevent cellular inhibition of viral genome replication. Assembles an SCF-like E3 ubiquitin ligase complex based on the cellular proteins ELOB, ELOC, CUL5 and RBX1, in cooperation with viral E4orf6. This viral RING-type ligase ubiquitinates cellular substrates and targets them to proteasomal degradation: TP53/p53, LIG4, MRE11-RAD50-NBS1 (MRN) complex, ITGA3, DAXX and BLM. E1B-55K probably acts as the substrate-specific adapter of the SCF-like E3 ubiquitin ligase complex. Degradation of host TP53/p53 activity is essential for preventing E1A-induced TP53 accumulation that would otherwise lead to cell apoptosis and growth arrest. E1B-55K also inactivates TP53 transcription-factor activity by binding its transactivation domain. E1B-55K also functions as a SUMO1 E3 ligase for TP53 which causes the latter to be sequestered in promyelocytic leukemia (PML) nuclear bodies thereby contributing to maximal inhibition of TP53 function. The chain is E1B 55 kDa protein from Canis lupus familiaris (Dog).